The sequence spans 65 residues: Protein translocase subunit SecE (65 aa).

The helical transmembrane segment at 44–64 (LVMAVVGLIAYIVQLTTSLII) threads the bilayer.

The protein belongs to the SecE/SEC61-gamma family. As to quaternary structure, component of the Sec protein translocase complex. Heterotrimer consisting of SecY (alpha), SecG (beta) and SecE (gamma) subunits. The heterotrimers can form oligomers, although 1 heterotrimer is thought to be able to translocate proteins. Interacts with the ribosome. May interact with SecDF, and other proteins may be involved.

It is found in the cell membrane. Essential subunit of the Sec protein translocation channel SecYEG. Clamps together the 2 halves of SecY. May contact the channel plug during translocation. The sequence is that of Protein translocase subunit SecE from Sulfolobus acidocaldarius (strain ATCC 33909 / DSM 639 / JCM 8929 / NBRC 15157 / NCIMB 11770).